The chain runs to 1006 residues: Probable protein phosphatase DDB_G0279461 (1006 aa).

Polar residues predominate over residues 1-12 (MMVPSLSTSISS). Disordered regions lie at residues 1–119 (MMVP…NNKE), 146–188 (SHAS…RSNS), 214–269 (SSED…NGIR), 312–387 (DAES…PPNQ), 459–513 (NINN…NNIQ), 525–563 (DYNIQEGNDINNDNYEIRVSNNDDDNDSSNNNNNNNSKF), and 604–642 (GSIPTDEDQNNNNNKNKNTTTTTTTTNTTTTTTTTTSAS). Acidic residues predominate over residues 59 to 69 (NEEEGTADNEL). The stretch at 65–122 (ADNELESLMSLVNDNNNNNNNTSGIDDDNNNDIDDNNNNNNNNNNNNNNNNNNKEGLN) forms a coiled coil. Residues 77–88 (NDNNNNNNNTSG) show a composition bias toward low complexity. Acidic residues predominate over residues 89–99 (IDDDNNNDIDD). Residues 100–117 (NNNNNNNNNNNNNNNNNN) are compositionally biased toward low complexity. Over residues 146-158 (SHASVSNQSSNGS) the composition is skewed to polar residues. 3 stretches are compositionally biased toward low complexity: residues 220–234 (SCHNSNNNNKNNKNN), 244–254 (NINNNNNNNCN), and 316–387 (NYNN…PPNQ). Positions 450-516 (KIDNLNKNIN…NNNNNIQDIQ (67 aa)) form a coiled coil. Over residues 466 to 481 (TDSQQPLPSIDVNFSH) the composition is skewed to polar residues. Residues 482-511 (NNNNNNNDNDNNNNNNNNNNNNNNNNNNNN) are compositionally biased toward low complexity. The segment covering 525–538 (DYNIQEGNDINNDN) has biased composition (polar residues). Composition is skewed to low complexity over residues 552–561 (SSNNNNNNNS) and 613–639 (NNNNNKNKNTTTTTTTTNTTTTTTTTT). A PPM-type phosphatase domain is found at 744–1005 (DINKRGLKRA…DNISIIVVTL (262 aa)). Mn(2+) is bound by residues aspartate 784, glycine 785, aspartate 956, and aspartate 996.

This sequence in the C-terminal section; belongs to the PP2C family. It depends on Mg(2+) as a cofactor. The cofactor is Mn(2+).

It carries out the reaction O-phospho-L-seryl-[protein] + H2O = L-seryl-[protein] + phosphate. The catalysed reaction is O-phospho-L-threonyl-[protein] + H2O = L-threonyl-[protein] + phosphate. This chain is Probable protein phosphatase DDB_G0279461, found in Dictyostelium discoideum (Social amoeba).